The sequence spans 111 residues: Large ribosomal subunit protein uL22 (111 aa).

This sequence belongs to the universal ribosomal protein uL22 family. Part of the 50S ribosomal subunit.

In terms of biological role, this protein binds specifically to 23S rRNA; its binding is stimulated by other ribosomal proteins, e.g. L4, L17, and L20. It is important during the early stages of 50S assembly. It makes multiple contacts with different domains of the 23S rRNA in the assembled 50S subunit and ribosome. Functionally, the globular domain of the protein is located near the polypeptide exit tunnel on the outside of the subunit, while an extended beta-hairpin is found that lines the wall of the exit tunnel in the center of the 70S ribosome. In Mycoplasma capricolum subsp. capricolum (strain California kid / ATCC 27343 / NCTC 10154), this protein is Large ribosomal subunit protein uL22.